We begin with the raw amino-acid sequence, 573 residues long: Dihydroxy-acid dehydratase (573 aa).

A [2Fe-2S] cluster-binding site is contributed by C62. Residue D94 coordinates Mg(2+). Residue C135 participates in [2Fe-2S] cluster binding. 2 residues coordinate Mg(2+): D136 and K137. Position 137 is an N6-carboxylysine (K137). [2Fe-2S] cluster is bound at residue C212. Mg(2+) is bound at residue E463. S489 (proton acceptor) is an active-site residue.

Belongs to the IlvD/Edd family. In terms of assembly, homodimer. The cofactor is [2Fe-2S] cluster. Requires Mg(2+) as cofactor.

It catalyses the reaction (2R)-2,3-dihydroxy-3-methylbutanoate = 3-methyl-2-oxobutanoate + H2O. The catalysed reaction is (2R,3R)-2,3-dihydroxy-3-methylpentanoate = (S)-3-methyl-2-oxopentanoate + H2O. It functions in the pathway amino-acid biosynthesis; L-isoleucine biosynthesis; L-isoleucine from 2-oxobutanoate: step 3/4. The protein operates within amino-acid biosynthesis; L-valine biosynthesis; L-valine from pyruvate: step 3/4. Its function is as follows. Functions in the biosynthesis of branched-chain amino acids. Catalyzes the dehydration of (2R,3R)-2,3-dihydroxy-3-methylpentanoate (2,3-dihydroxy-3-methylvalerate) into 2-oxo-3-methylpentanoate (2-oxo-3-methylvalerate) and of (2R)-2,3-dihydroxy-3-methylbutanoate (2,3-dihydroxyisovalerate) into 2-oxo-3-methylbutanoate (2-oxoisovalerate), the penultimate precursor to L-isoleucine and L-valine, respectively. The protein is Dihydroxy-acid dehydratase of Arthrobacter sp. (strain FB24).